The chain runs to 800 residues: Receptor-like protein 47 (800 aa).

The N-terminal stretch at 1-31 is a signal peptide; it reads MMHSSSVRRMITVKWSLCLIFCLTNSILVSA. Residues 32–759 lie on the Extracellular side of the membrane; the sequence is KHLCLPDQKD…QDEDKEEEDQ (728 aa). N-linked (GlcNAc...) asparagine glycans are attached at residues asparagine 66 and asparagine 102. 23 LRR repeats span residues 109–131, 133–156, 157–179, 190–213, 214–238, 240–262, 263–288, 294–311, 312–334, 335–358, 360–383, 385–406, 407–430, 431–453, 455–477, 479–500, 502–523, 524–550, 551–574, 621–645, 646–669, 670–693, and 695–718; these read QHLQ…SIGN, KRLK…LGNL, SYLT…SMGN, LSSV…NMSS, LSKL…LFMI, SLIL…NISS, PSNL…IFSP, YLDV…VSLP, SPIE…LRNQ, TSLE…LWSL, ELRY…VIQG, RELL…LLPV, VSMN…ICEL, DNLR…CFEN, HLYV…AISH, LQSF…LINC, DIEF…WLEL, LPNL…SLSF, SRLR…YFVG, FTIY…IGLL, KEVI…LSNL, SNLQ…LGKL, and FLEW…QIQT. The N-linked (GlcNAc...) asparagine glycan is linked to asparagine 155. Asparagine 210 carries an N-linked (GlcNAc...) asparagine glycan. Asparagine 259 is a glycosylation site (N-linked (GlcNAc...) asparagine). N-linked (GlcNAc...) asparagine glycosylation is found at asparagine 323 and asparagine 333. Asparagine 365 is a glycosylation site (N-linked (GlcNAc...) asparagine). 4 N-linked (GlcNAc...) asparagine glycosylation sites follow: asparagine 442, asparagine 465, asparagine 499, and asparagine 514. N-linked (GlcNAc...) asparagine glycosylation occurs at asparagine 668. N-linked (GlcNAc...) asparagine glycosylation occurs at asparagine 700. A helical transmembrane segment spans residues 760–780; sequence VFSWIAAAIGYVPGVVCGLTI. At 781-800 the chain is on the cytoplasmic side; sequence GHILVSHKRDWFMRIVSFFT.

The protein belongs to the RLP family.

Its subcellular location is the cell membrane. The polypeptide is Receptor-like protein 47 (Arabidopsis thaliana (Mouse-ear cress)).